Consider the following 360-residue polypeptide: Secreted LysM effector LysM2 (360 aa).

The signal sequence occupies residues 1–21 (MKISSLSILPLLGVVSAGIHG). Residues 37 to 85 (TWYLDLVDDSYTCENIESQWDLSHEAFVAWNPGVKKDCSGLKVGLSVCV) form the LysM 1 domain. The span at 94 to 113 (ATPTSEASTSSETSSASPTA) shows a compositional bias: low complexity. The interval 94 to 125 (ATPTSEASTSSETSSASPTASRPPLPSPTQDG) is disordered. Residue asparagine 129 is glycosylated (N-linked (GlcNAc...) asparagine). The 48-residue stretch at 132–179 (KFHQAVSGDTCSKIISRYKPITLDQFIEWNPALEKDCSGLWSGYYYCV) folds into the LysM 2 domain. A glycan (N-linked (GlcNAc...) asparagine) is linked at asparagine 204. LysM domains follow at residues 225-272 (RWHK…YYCI) and 311-357 (KWHQ…YVCV).

It belongs to the secreted LysM effector family.

The protein resides in the secreted. It localises to the cell wall. In terms of biological role, secreted effector that binds two substrates, chitin and N-linked oligosaccharides associated with human skin glycoproteins. Could provide the pathogen with three important functions including shielding host cell wall chitin from the human immune system, shielding the pathogen's glycoproteins from host degradation and immune surveillance, and helping facilitate pathogen adhesion to human skin. The protein is Secreted LysM effector LysM2 of Trichophyton rubrum (strain ATCC MYA-4607 / CBS 118892) (Athlete's foot fungus).